The chain runs to 512 residues: Aldehyde dehydrogenase B (512 aa).

Active-site residues include E268 and C307.

Homotetramer.

The enzyme catalyses an aldehyde + NADP(+) + H2O = a carboxylate + NADPH + 2 H(+). The catalysed reaction is acetaldehyde + NADP(+) + H2O = acetate + NADPH + 2 H(+). It catalyses the reaction chloroacetaldehyde + NADP(+) + H2O = chloroacetate + NADPH + 2 H(+). It carries out the reaction propanal + NADP(+) + H2O = propanoate + NADPH + 2 H(+). Magnesium increases enzyme activity with various substrates. Its function is as follows. Catalyzes the NADP(+)-dependent oxidation of diverse aldehydes to their corresponding carboxylic acids, with a preference for acetaldehyde and chloroacetaldehyde. May play a role in detoxifying aldehydes present during stationary phase. Cannot use NAD(+) instead of NADP(+) as the electron acceptor. To a lesser extent is also able to oxidize propionaldehyde (propanal), benzaldehyde, mafosfamide, and 4-hydroperoxycyclophosphamide. Does not use either glyceraldehyde or glycolaldehyde as substrates. In Escherichia coli (strain K12), this protein is Aldehyde dehydrogenase B.